A 551-amino-acid chain; its full sequence is Solute carrier family 22 member 6 (551 aa).

Over 1–23 the chain is Cytoplasmic; that stretch reads MAFNDLLKQVGGVGRFQRIQVTL. Residues 24–44 form a helical membrane-spanning segment; the sequence is VVLPLLLMASHNTLQNFTAAI. The Extracellular segment spans residues 45-135; that stretch reads PPHHCRPPAH…LVCSHRALRQ (91 aa). N-linked (GlcNAc...) asparagine glycosylation is found at N56, N92, and N113. A helical transmembrane segment spans residues 136–156; sequence LGQSLYMAGVLIGAMVFGYLA. Topologically, residues 157 to 164 are cytoplasmic; it reads DRLGRRKV. A helical transmembrane segment spans residues 165-187; sequence LILNYLQTAVSGTCAAFSPNFTV. Residues 188 to 195 are Extracellular-facing; it reads YCTFRLLS. A helical transmembrane segment spans residues 196–216; that stretch reads GMSLAGIALNCMTLNVEWMPI. Over 217–224 the chain is Cytoplasmic; it reads HTRAYVGT. A helical transmembrane segment spans residues 225 to 245; the sequence is LAGYVYSTGQFLLAGVAYAVP. Over 246 to 248 the chain is Extracellular; that stretch reads HWR. The chain crosses the membrane as a helical span at residues 249–269; sequence YLQLLVSVPFFAFFVYSWFFI. Residues 270–337 lie on the Cytoplasmic side of the membrane; it reads ESARWYSTPG…ELLRCPALRH (68 aa). A helical transmembrane segment spans residues 338–358; it reads LFLCLSLLWFATSFAYYGLVM. The Extracellular segment spans residues 359–368; it reads DLQGFGVSIY. The helical transmembrane segment at 369 to 389 threads the bilayer; it reads LIQVIFGAVDLPAKLVCFLVI. The Cytoplasmic segment spans residues 390 to 395; sequence NSLGRR. Residues 396–416 traverse the membrane as a helical segment; that stretch reads PAQMASLLLAGICILVNGVIP. At 417-425 the chain is on the extracellular side; it reads RDQSIVRTS. The chain crosses the membrane as a helical span at residues 426–446; it reads LAVLGKGCLASSFNCIFLYTG. The Cytoplasmic segment spans residues 447–484; the sequence is ELYPTMIRQTGLGMGSTMARVGSIVSPLVSMTSELYPS. Residues 485-505 form a helical membrane-spanning segment; sequence LPLFIYGAVPVAASAATALLP. The Extracellular portion of the chain corresponds to 506 to 551; sequence ETLGQPLPDTVQDLESRRRGKPRRQQQEQQKQMVPLQASVQEKNGL. Residues 520 to 551 are disordered; it reads ESRRRGKPRRQQQEQQKQMVPLQASVQEKNGL.

The protein belongs to the major facilitator (TC 2.A.1) superfamily. Organic cation transporter (TC 2.A.1.19) family. In terms of processing, glycosylated. Glycosylation is necessary for proper targeting of the transporter to the plasma membrane.

Its subcellular location is the basolateral cell membrane. The protein resides in the basal cell membrane. It carries out the reaction (6R)-L-erythro-5,6,7,8-tetrahydrobiopterin(out) + a dicarboxylate(in) = (6R)-L-erythro-5,6,7,8-tetrahydrobiopterin(in) + a dicarboxylate(out). The enzyme catalyses L-erythro-7,8-dihydrobiopterin(out) + a dicarboxylate(in) = L-erythro-7,8-dihydrobiopterin(in) + a dicarboxylate(out). It catalyses the reaction L-sepiapterin(out) + a dicarboxylate(in) = L-sepiapterin(in) + a dicarboxylate(out). The catalysed reaction is prostaglandin F2alpha(out) + a dicarboxylate(in) = prostaglandin F2alpha(in) + a dicarboxylate(out). It carries out the reaction prostaglandin E2(out) + a dicarboxylate(in) = prostaglandin E2(in) + a dicarboxylate(out). The enzyme catalyses 3',5'-cyclic AMP(out) + a dicarboxylate(in) = 3',5'-cyclic AMP(in) + a dicarboxylate(out). It catalyses the reaction 3',5'-cyclic GMP(out) + a dicarboxylate(in) = 3',5'-cyclic GMP(in) + a dicarboxylate(out). The catalysed reaction is urate(out) + a dicarboxylate(in) = urate(in) + a dicarboxylate(out). It carries out the reaction kynurenate(out) + glutarate(in) = kynurenate(in) + glutarate(out). The enzyme catalyses (indol-3-yl)acetate(out) + a dicarboxylate(in) = (indol-3-yl)acetate(in) + a dicarboxylate(out). It catalyses the reaction indoxyl sulfate(out) + a dicarboxylate(in) = indoxyl sulfate(in) + a dicarboxylate(out). The catalysed reaction is N-benzoylglycine(out) + a dicarboxylate(in) = N-benzoylglycine(in) + a dicarboxylate(out). It carries out the reaction 3-carboxy-4-methyl-5-propyl-2-furanpropanoate(out) + a dicarboxylate(in) = 3-carboxy-4-methyl-5-propyl-2-furanpropanoate(in) + a dicarboxylate(out). Secondary active transporter that functions as a Na(+)-independent organic anion (OA)/dicarboxylate antiporter where the uptake of one molecule of OA into the cell is coupled with an efflux of one molecule of intracellular dicarboxylate such as 2-oxoglutarate or glutarate. Mediates the uptake of OA across the basolateral side of proximal tubule epithelial cells, thereby contributing to the renal elimination of endogenous OA from the systemic circulation into the urine. Functions as a biopterin transporters involved in the uptake and the secretion of coenzymes tetrahydrobiopterin (BH4), dihydrobiopterin (BH2) and sepiapterin to urine, thereby determining baseline levels of blood biopterins. Transports prostaglandin E2 (PGE2) and prostaglandin F2-alpha (PGF2-alpha) and may contribute to their renal excretion. Also mediates the uptake of cyclic nucleotides such as cAMP and cGMP. Involved in the transport of neuroactive tryptophan metabolites kynurenate (KYNA) and xanthurenate (XA) and may contribute to their secretion from the brain. May transport glutamate. Also involved in the disposition of uremic toxins and potentially toxic xenobiotics by the renal organic anion secretory pathway, helping reduce their undesired toxicological effects on the body. Uremic toxins include the indoxyl sulfate (IS), hippurate/N-benzoylglycine (HA), indole acetate (IA), 3-carboxy-4- methyl-5-propyl-2-furanpropionate (CMPF) and urate. Xenobiotics include the mycotoxin ochratoxin (OTA). May also contribute to the transport of organic compounds in testes across the blood-testis-barrier. May also work as a bidirectional OA/dicarboxylate exchanger. This Oryctolagus cuniculus (Rabbit) protein is Solute carrier family 22 member 6.